Consider the following 455-residue polypeptide: UDP-N-acetylmuramoylalanine--D-glutamate ligase (455 aa).

119–125 (GTNGKTT) is a binding site for ATP.

It belongs to the MurCDEF family.

The protein resides in the cytoplasm. It catalyses the reaction UDP-N-acetyl-alpha-D-muramoyl-L-alanine + D-glutamate + ATP = UDP-N-acetyl-alpha-D-muramoyl-L-alanyl-D-glutamate + ADP + phosphate + H(+). It functions in the pathway cell wall biogenesis; peptidoglycan biosynthesis. Its function is as follows. Cell wall formation. Catalyzes the addition of glutamate to the nucleotide precursor UDP-N-acetylmuramoyl-L-alanine (UMA). The sequence is that of UDP-N-acetylmuramoylalanine--D-glutamate ligase from Listeria monocytogenes serovar 1/2a (strain ATCC BAA-679 / EGD-e).